Consider the following 354-residue polypeptide: Methionine import ATP-binding protein MetN (354 aa).

The 243-residue stretch at 8-250 folds into the ABC transporter domain; sequence LDHIDITFRQ…PKEALTQEFI (243 aa). 42–49 is an ATP binding site; it reads GYSGAGKS.

The protein belongs to the ABC transporter superfamily. Methionine importer (TC 3.A.1.24) family. The complex is composed of two ATP-binding proteins (MetN), two transmembrane proteins (MetI) and a solute-binding protein (MetQ).

The protein localises to the cell membrane. It catalyses the reaction L-methionine(out) + ATP + H2O = L-methionine(in) + ADP + phosphate + H(+). The enzyme catalyses D-methionine(out) + ATP + H2O = D-methionine(in) + ADP + phosphate + H(+). Part of the ABC transporter complex MetNIQ involved in methionine import. Responsible for energy coupling to the transport system. The sequence is that of Methionine import ATP-binding protein MetN from Streptococcus pyogenes serotype M3 (strain ATCC BAA-595 / MGAS315).